A 618-amino-acid polypeptide reads, in one-letter code: Dihydroxy-acid dehydratase 1 (618 aa).

Residue Asp-81 participates in Mg(2+) binding. Cys-122 contributes to the [2Fe-2S] cluster binding site. Residues Asp-123 and Lys-124 each contribute to the Mg(2+) site. The residue at position 124 (Lys-124) is an N6-carboxylysine. Cys-195 is a [2Fe-2S] cluster binding site. Glu-491 provides a ligand contact to Mg(2+). Ser-517 functions as the Proton acceptor in the catalytic mechanism.

The protein belongs to the IlvD/Edd family. In terms of assembly, homodimer. [2Fe-2S] cluster serves as cofactor. The cofactor is Mg(2+).

The catalysed reaction is (2R)-2,3-dihydroxy-3-methylbutanoate = 3-methyl-2-oxobutanoate + H2O. The enzyme catalyses (2R,3R)-2,3-dihydroxy-3-methylpentanoate = (S)-3-methyl-2-oxopentanoate + H2O. It participates in amino-acid biosynthesis; L-isoleucine biosynthesis; L-isoleucine from 2-oxobutanoate: step 3/4. The protein operates within amino-acid biosynthesis; L-valine biosynthesis; L-valine from pyruvate: step 3/4. In terms of biological role, functions in the biosynthesis of branched-chain amino acids. Catalyzes the dehydration of (2R,3R)-2,3-dihydroxy-3-methylpentanoate (2,3-dihydroxy-3-methylvalerate) into 2-oxo-3-methylpentanoate (2-oxo-3-methylvalerate) and of (2R)-2,3-dihydroxy-3-methylbutanoate (2,3-dihydroxyisovalerate) into 2-oxo-3-methylbutanoate (2-oxoisovalerate), the penultimate precursor to L-isoleucine and L-valine, respectively. The chain is Dihydroxy-acid dehydratase 1 from Pseudoalteromonas translucida (strain TAC 125).